Here is a 146-residue protein sequence, read N- to C-terminus: Transcriptional regulator MraZ (146 aa).

2 SpoVT-AbrB domains span residues 5 to 50 (SSFH…TFNE) and 77 to 120 (ACEC…SREQ).

This sequence belongs to the MraZ family. Forms oligomers.

It is found in the cytoplasm. It localises to the nucleoid. The protein is Transcriptional regulator MraZ of Desulforapulum autotrophicum (strain ATCC 43914 / DSM 3382 / VKM B-1955 / HRM2) (Desulfobacterium autotrophicum).